Reading from the N-terminus, the 110-residue chain is Thiosulfate sulfurtransferase GlpE (110 aa).

Residues K17–A105 enclose the Rhodanese domain. The active-site Cysteine persulfide intermediate is the C65.

This sequence belongs to the GlpE family.

The protein resides in the cytoplasm. The catalysed reaction is thiosulfate + hydrogen cyanide = thiocyanate + sulfite + 2 H(+). The enzyme catalyses thiosulfate + [thioredoxin]-dithiol = [thioredoxin]-disulfide + hydrogen sulfide + sulfite + 2 H(+). Its function is as follows. Transferase that catalyzes the transfer of sulfur from thiosulfate to thiophilic acceptors such as cyanide or dithiols. May function in a CysM-independent thiosulfate assimilation pathway by catalyzing the conversion of thiosulfate to sulfite, which can then be used for L-cysteine biosynthesis. The chain is Thiosulfate sulfurtransferase GlpE from Pseudomonas putida (strain GB-1).